The sequence spans 256 residues: Small ribosomal subunit protein bS18m (256 aa).

Residues 19–106 are disordered; the sequence is GQRTAQFSTT…GGQRYGSNSQ (88 aa). The segment covering 21-30 has biased composition (polar residues); the sequence is RTAQFSTTSP. Positions 44–66 are enriched in low complexity; that stretch reads NAPRTNTNTSSPSSNNNNNAGSS.

This sequence belongs to the bacterial ribosomal protein bS18 family. As to quaternary structure, component of the mitochondrial small ribosomal subunit (mt-SSU). Mature N.crassa 74S mitochondrial ribosomes consist of a small (37S) and a large (54S) subunit. The 37S small subunit contains a 16S ribosomal RNA (16S mt-rRNA) and 32 different proteins. The 54S large subunit contains a 23S rRNA (23S mt-rRNA) and 42 different proteins.

Its subcellular location is the mitochondrion. Functionally, component of the mitochondrial ribosome (mitoribosome), a dedicated translation machinery responsible for the synthesis of mitochondrial genome-encoded proteins, including at least some of the essential transmembrane subunits of the mitochondrial respiratory chain. The mitoribosomes are attached to the mitochondrial inner membrane and translation products are cotranslationally integrated into the membrane. The chain is Small ribosomal subunit protein bS18m (rsm18) from Neurospora crassa (strain ATCC 24698 / 74-OR23-1A / CBS 708.71 / DSM 1257 / FGSC 987).